The primary structure comprises 155 residues: 6,7-dimethyl-8-ribityllumazine synthase (155 aa).

Residues Phe-24, 58 to 60 (AFE), and 82 to 84 (VII) each bind 5-amino-6-(D-ribitylamino)uracil. 87 to 88 (ST) is a binding site for (2S)-2-hydroxy-3-oxobutyl phosphate. The Proton donor role is filled by His-90. Phe-115 contributes to the 5-amino-6-(D-ribitylamino)uracil binding site. Residue Arg-129 participates in (2S)-2-hydroxy-3-oxobutyl phosphate binding.

It belongs to the DMRL synthase family.

The enzyme catalyses (2S)-2-hydroxy-3-oxobutyl phosphate + 5-amino-6-(D-ribitylamino)uracil = 6,7-dimethyl-8-(1-D-ribityl)lumazine + phosphate + 2 H2O + H(+). Its pathway is cofactor biosynthesis; riboflavin biosynthesis; riboflavin from 2-hydroxy-3-oxobutyl phosphate and 5-amino-6-(D-ribitylamino)uracil: step 1/2. Its function is as follows. Catalyzes the formation of 6,7-dimethyl-8-ribityllumazine by condensation of 5-amino-6-(D-ribitylamino)uracil with 3,4-dihydroxy-2-butanone 4-phosphate. This is the penultimate step in the biosynthesis of riboflavin. The chain is 6,7-dimethyl-8-ribityllumazine synthase from Pelodictyon phaeoclathratiforme (strain DSM 5477 / BU-1).